The sequence spans 167 residues: S-ribosylhomocysteine lyase (167 aa).

His54, His58, and Cys128 together coordinate Fe cation.

This sequence belongs to the LuxS family. Homodimer. Fe cation is required as a cofactor.

It carries out the reaction S-(5-deoxy-D-ribos-5-yl)-L-homocysteine = (S)-4,5-dihydroxypentane-2,3-dione + L-homocysteine. Its function is as follows. Involved in the synthesis of autoinducer 2 (AI-2) which is secreted by bacteria and is used to communicate both the cell density and the metabolic potential of the environment. The regulation of gene expression in response to changes in cell density is called quorum sensing. Catalyzes the transformation of S-ribosylhomocysteine (RHC) to homocysteine (HC) and 4,5-dihydroxy-2,3-pentadione (DPD). The protein is S-ribosylhomocysteine lyase of Haemophilus influenzae (strain 86-028NP).